We begin with the raw amino-acid sequence, 192 residues long: Ribosome maturation factor RimM (192 aa).

Residues 115–189 (EGEYYLSDLI…RIEITPPKGL (75 aa)) form the PRC barrel domain.

It belongs to the RimM family. As to quaternary structure, binds ribosomal protein uS19.

It localises to the cytoplasm. An accessory protein needed during the final step in the assembly of 30S ribosomal subunit, possibly for assembly of the head region. Essential for efficient processing of 16S rRNA. May be needed both before and after RbfA during the maturation of 16S rRNA. It has affinity for free ribosomal 30S subunits but not for 70S ribosomes. The chain is Ribosome maturation factor RimM from Acaryochloris marina (strain MBIC 11017).